The sequence spans 247 residues: Probable transcriptional regulatory protein EUBELI_00902 (247 aa).

The protein belongs to the TACO1 family.

Its subcellular location is the cytoplasm. This chain is Probable transcriptional regulatory protein EUBELI_00902, found in Lachnospira eligens (strain ATCC 27750 / DSM 3376 / VPI C15-48 / C15-B4) (Eubacterium eligens).